We begin with the raw amino-acid sequence, 234 residues long: Ribonuclease HII (234 aa).

Residues 16-207 (ALVAGVDEAG…VRRMLTPKAI (192 aa)) enclose the RNase H type-2 domain. A divalent metal cation-binding residues include aspartate 22, glutamate 23, and aspartate 115.

This sequence belongs to the RNase HII family. The cofactor is Mn(2+). It depends on Mg(2+) as a cofactor.

The protein localises to the cytoplasm. The enzyme catalyses Endonucleolytic cleavage to 5'-phosphomonoester.. Endonuclease that specifically degrades the RNA of RNA-DNA hybrids. The chain is Ribonuclease HII from Xylella fastidiosa (strain M12).